The following is a 351-amino-acid chain: Phosphate acyltransferase (351 aa).

This sequence belongs to the PlsX family. Homodimer. Probably interacts with PlsY.

The protein localises to the cytoplasm. The enzyme catalyses a fatty acyl-[ACP] + phosphate = an acyl phosphate + holo-[ACP]. It functions in the pathway lipid metabolism; phospholipid metabolism. Catalyzes the reversible formation of acyl-phosphate (acyl-PO(4)) from acyl-[acyl-carrier-protein] (acyl-ACP). This enzyme utilizes acyl-ACP as fatty acyl donor, but not acyl-CoA. This is Phosphate acyltransferase from Neisseria meningitidis serogroup A / serotype 4A (strain DSM 15465 / Z2491).